Consider the following 215-residue polypeptide: Redox-sensing transcriptional repressor Rex (215 aa).

Residues 18–57 (LYYRFLKNLHASGKQRVSSAELSDAVKVDSATIRRDFSYF) constitute a DNA-binding region (H-T-H motif). 92 to 97 (GVGNLG) is a binding site for NAD(+).

Belongs to the transcriptional regulatory Rex family. Homodimer.

The protein localises to the cytoplasm. Functionally, modulates transcription in response to changes in cellular NADH/NAD(+) redox state. This chain is Redox-sensing transcriptional repressor Rex, found in Bacillus velezensis (strain DSM 23117 / BGSC 10A6 / LMG 26770 / FZB42) (Bacillus amyloliquefaciens subsp. plantarum).